A 1465-amino-acid polypeptide reads, in one-letter code: Neuropathy target esterase sws (1465 aa).

Residues 1–34 (MDVLEMLRASASGSYNTIFSEAWCQYVSKQITAT) are Lumenal-facing. Residues 35 to 55 (MYMYCALGMMGVLFLAWFMYF) traverse the membrane as a helical segment. Over 56–1465 (KRMARLRLRD…RSSANNETKN (1410 aa)) the chain is Cytoplasmic. 174–301 (IFGHFEKPVF…IRVIQVIMIR (128 aa)) is an a nucleoside 3',5'-cyclic phosphate binding site. Composition is skewed to polar residues over residues 331 to 349 (STMS…RQTP) and 434 to 454 (QQSV…TPDG). Disordered regions lie at residues 331-421 (STMS…TEVH) and 434-460 (QQSV…SCPP). A phosphoserine mark is found at Ser-446 and Ser-455. Residues 484-611 (ELGL…VVRR) and 600-727 (IVLD…LSHR) each bind a nucleoside 3',5'-cyclic phosphate. One can recognise a PNPLA domain in the interval 954 to 1120 (LVLGGGGARG…VNNLPGHLWR (167 aa)). The GXGXXG signature appears at 958–963 (GGGARG). A GXSXG motif is present at residues 985 to 989 (GVSIG). The Nucleophile role is filled by Ser-987. Residue Asp-1107 is the Proton acceptor of the active site. The DGA/G motif lies at 1107–1109 (DGG). The residue at position 1201 (Ser-1201) is a Phosphoserine. The segment at 1371–1465 (LERKTDKSTQ…RSSANNETKN (95 aa)) is disordered. The segment covering 1378–1390 (STQSSPPTSSRTS) has biased composition (low complexity). Residues 1392 to 1402 (RGKEEARHMDN) are compositionally biased toward basic and acidic residues. Over residues 1413 to 1424 (TGSGATEGIHTS) the composition is skewed to polar residues. Over residues 1447–1456 (VYKDEDKENR) the composition is skewed to basic and acidic residues.

This sequence belongs to the NTE family. Interacts with Pka-C3; interaction inhibits the catalytic function of Pka-C3 and the esterase activity of sws.

It is found in the endoplasmic reticulum membrane. It carries out the reaction a 1-acyl-sn-glycero-3-phosphocholine + H2O = sn-glycerol 3-phosphocholine + a fatty acid + H(+). Functionally, phospholipase B that deacylates intracellular phosphatidylcholine (PtdCho), generating glycerophosphocholine (GroPtdCho). This deacylation occurs at both sn-2 and sn-1 positions of PtdCho. Its specific chemical modification by certain organophosphorus (OP) compounds leads to distal axonopathy. Plays a role in the signaling mechanism between neurons and glia that regulates glia wrapping during development of the adult brain. Essential for membrane lipid homeostasis and cell survival in both neurons and glia of the adult brain. The protein is Neuropathy target esterase sws of Drosophila erecta (Fruit fly).